The sequence spans 1464 residues: Neuropathy target esterase sws (1464 aa).

The Lumenal segment spans residues 1–34; it reads MDVLELLRASATGCYNTIFSEAWHQYVHKQIAAA. The helical transmembrane segment at 35–55 threads the bilayer; it reads VYWYGALFLLGVLLFVWFLYF. The Cytoplasmic segment spans residues 56–1464; that stretch reads KRLARLRLRD…GNTTNNDTKN (1409 aa). An a nucleoside 3',5'-cyclic phosphate-binding site is contributed by 176-303; the sequence is IFGHFEKPIF…IRVIQVIMIR (128 aa). Disordered stretches follow at residues 329-393 and 409-438; these read NKNS…LHYH and QQQQ…SSPT. Residues 338 to 367 are compositionally biased toward low complexity; it reads TGQTTSNVQSQTSQATQSRPSGTTRTPTSP. Residues 409–420 are compositionally biased toward polar residues; the sequence is QQQQSLNSPRRN. Ser421 carries the post-translational modification Phosphoserine. Residues 422–438 are compositionally biased toward low complexity; it reads TAHVSEAAAASTASSPT. Residues 456–586 and 575–702 contribute to the a nucleoside 3',5'-cyclic phosphate site; these read ELGL…VVRR and IVLG…LSHR. The 167-residue stretch at 928-1094 folds into the PNPLA domain; sequence LVLGGGGARG…VNNLPGHLWR (167 aa). Positions 932–937 match the GXGXXG motif; sequence GGGARG. A GXSXG motif is present at residues 959 to 963; the sequence is GVSIG. Ser961 serves as the catalytic Nucleophile. Asp1081 acts as the Proton acceptor in catalysis. The DGA/G signature appears at 1081–1083; that stretch reads DGG. The residue at position 1175 (Ser1175) is a Phosphoserine. Disordered regions lie at residues 1352–1374 and 1400–1464; these read VDKA…PTPS and ATNT…DTKN. Residues 1429–1444 are compositionally biased toward basic and acidic residues; that stretch reads KRTEQDEHELEHEQVV. The segment covering 1450–1464 has biased composition (polar residues); it reads MDKQQGNTTNNDTKN.

Belongs to the NTE family. Interacts with Pka-C3; interaction inhibits the catalytic function of Pka-C3 and the esterase activity of sws.

The protein resides in the endoplasmic reticulum membrane. The catalysed reaction is a 1-acyl-sn-glycero-3-phosphocholine + H2O = sn-glycerol 3-phosphocholine + a fatty acid + H(+). Its function is as follows. Phospholipase B that deacylates intracellular phosphatidylcholine (PtdCho), generating glycerophosphocholine (GroPtdCho). This deacylation occurs at both sn-2 and sn-1 positions of PtdCho. Its specific chemical modification by certain organophosphorus (OP) compounds leads to distal axonopathy. Plays a role in the signaling mechanism between neurons and glia that regulates glia wrapping during development of the adult brain. Essential for membrane lipid homeostasis and cell survival in both neurons and glia of the adult brain. The chain is Neuropathy target esterase sws from Drosophila grimshawi (Hawaiian fruit fly).